Consider the following 859-residue polypeptide: Protein argonaute-2 (859 aa).

Residues 1–27 (MYSGAGPALAPPAPPPPIQGYAFKPPP) are disordered. Tyrosine 2 bears the 3'-nitrotyrosine mark. The span at 9-27 (LAPPAPPPPIQGYAFKPPP) shows a compositional bias: pro residues. One can recognise a PAZ domain in the interval 229–348 (PVIEFVCEVL…LPLEVCNIVA (120 aa)). Positions 311 to 316 (YFKDRH) are interaction with guide RNA. Phosphoserine is present on serine 387. In terms of domain architecture, Piwi spans 517-818 (LVVVILPGKT…VAFRARYHLV (302 aa)). Residues 524–566 (GKTPVYAEVKRVGDTVLGMATQCVQMKNVQRTTPQTLSNLCLK) form an interaction with guide RNA region. The interaction with GW182 family members stretch occupies residues 587–590 (FQQP). Position 597 (aspartate 597) interacts with a divalent metal cation. The segment at 650-660 (LIQFYKSTRFK) is interaction with GW182 family members. Aspartate 669 is a binding site for a divalent metal cation. Proline 700 is modified (4-hydroxyproline). Interaction with guide RNA stretches follow at residues 709-710 (KR), 753-761 (HAGIQGTSR), and 790-812 (YVRC…VAFR). Histidine 807 provides a ligand contact to a divalent metal cation. Phosphoserine is present on residues serine 824, serine 828, serine 831, and serine 834.

The protein belongs to the argonaute family. Ago subfamily. As to quaternary structure, interacts with DICER1 through its Piwi domain and with TARBP2 during assembly of the RNA-induced silencing complex (RISC). Together, DICER1, AGO2 and TARBP2 constitute the trimeric RISC loading complex (RLC), or micro-RNA (miRNA) loading complex (miRLC). Within the RLC/miRLC, DICER1 and TARBP2 are required to process precursor miRNAs (pre-miRNAs) to mature miRNAs and then load them onto AGO2. AGO2 bound to the mature miRNA constitutes the minimal RISC and may subsequently dissociate from DICER1 and TARBP2. Note however that the term RISC has also been used to describe the trimeric RLC/miRLC. The formation of RISC complexes containing siRNAs rather than miRNAs appears to occur independently of DICER1. Interacts with AGO1. Also interacts with DDB1, DDX5, DDX6, DDX20, DHX30, DHX36, DDX47, DHX9, ELAVL, FXR1, GEMIN4, HNRNPF, IGF2BP1, ILF3, IMP8, MATR3, PABPC1, PRMT5, P4HA1, P4HB, RBM4, SART3, TNRC6A, TNRC6B, UPF1 and YBX1. Interacts with the P-body components DCP1A and XRN1. Associates with polysomes and messenger ribonucleoproteins (mNRPs). Interacts with RBM4; the interaction is modulated under stress-induced conditions, occurs under both cell proliferation and differentiation conditions and in an RNA- and phosphorylation-independent manner. Interacts with LIMD1, WTIP and AJUBA. Interacts with TRIM71; the interaction increases in presence of RNA. Interacts with APOBEC3G in an RNA-dependent manner. Interacts with APOBEC3A, APOBEC3C, APOBEC3F and APOBEC3H. Interacts with DICER1, TARBP2, EIF6, MOV10 and RPL7A (60S ribosome subunit); they form a large RNA-induced silencing complex (RISC). Interacts with FMR1. Interacts with ZFP36. Found in a complex, composed of AGO2, CHD7 and ARB2A. Interacts with RC3H1; the interaction is RNA independent. Interacts with SND1. Interacts with SYT11. Interacts with CLNK. Interacts with GARRE1. Interacts with GRB2; this interaction is important for the formation of a ternary complex containing GRB2, AGO2 and DICER1. (Microbial infection) Interacts with Epstein-Barr virus (EBV) tegument protein BGLF2; this interaction participates in the regulation of cellular miRNA by the virus, leading to enhanced SUMOylation. In terms of assembly, (Microbial infection) Interacts with rotavirus A non-structural protein 5; this interaction probably plays a role in the sequestration of AGO2 in viral factories. As to quaternary structure, (Microbial infection) Interacts with human herpesvirus 8 protein MTA/ORF57; this interaction inhibits P-body formation. The cofactor is Mg(2+). Requires Mn(2+) as cofactor. Hydroxylated. 4-hydroxylation appears to enhance protein stability but is not required for miRNA-binding or endonuclease activity. Post-translationally, ubiquitinated on surface-exposed lysines by a SCF-like E3 ubiquitin-protein ligase complex containing ZSWIM8 during target-directed microRNA degradation (TDMD), a process that mediates degradation of microRNAs (miRNAs). Ubiquitination by the SCF-like E3 ubiquitin-protein ligase complex containing ZSWIM8 leads to its subsequent degradation, thereby exposing miRNAs for degradation. ZSWIM8 recognizes and binds AGO2 when it is engaged with a TDMD target. In terms of processing, phosphorylated. A phosphorylation cycle of C-terminal serine cluster (Ser-824-Ser-834) regulates the release of target mRNAs. Target-binding leads to phosphorylation of these residues by CSNK1A1, which reduces the affinity of AGO2 for mRNA and enables target release. The ANKRD52-PPP6C phosphatase complex dephosphorylates the residues, which primes AGO2 for binding a new target. Phosphorylation at Ser-387 by AKT3; leads to up-regulate translational repression of microRNA target and down-regulate endonucleolytic cleavage.

It is found in the cytoplasm. The protein resides in the P-body. Its subcellular location is the nucleus. It catalyses the reaction Endonucleolytic cleavage to 5'-phosphomonoester.. Inhibited by EDTA. Required for RNA-mediated gene silencing (RNAi) by the RNA-induced silencing complex (RISC). The 'minimal RISC' appears to include AGO2 bound to a short guide RNA such as a microRNA (miRNA) or short interfering RNA (siRNA). These guide RNAs direct RISC to complementary mRNAs that are targets for RISC-mediated gene silencing. The precise mechanism of gene silencing depends on the degree of complementarity between the miRNA or siRNA and its target. Binding of RISC to a perfectly complementary mRNA generally results in silencing due to endonucleolytic cleavage of the mRNA specifically by AGO2. Binding of RISC to a partially complementary mRNA results in silencing through inhibition of translation, and this is independent of endonuclease activity. May inhibit translation initiation by binding to the 7-methylguanosine cap, thereby preventing the recruitment of the translation initiation factor eIF4-E. May also inhibit translation initiation via interaction with EIF6, which itself binds to the 60S ribosomal subunit and prevents its association with the 40S ribosomal subunit. The inhibition of translational initiation leads to the accumulation of the affected mRNA in cytoplasmic processing bodies (P-bodies), where mRNA degradation may subsequently occur. In some cases RISC-mediated translational repression is also observed for miRNAs that perfectly match the 3' untranslated region (3'-UTR). Can also up-regulate the translation of specific mRNAs under certain growth conditions. Binds to the AU element of the 3'-UTR of the TNF (TNF-alpha) mRNA and up-regulates translation under conditions of serum starvation. Also required for transcriptional gene silencing (TGS), in which short RNAs known as antigene RNAs or agRNAs direct the transcriptional repression of complementary promoter regions. In terms of biological role, (Microbial infection) Upon Sars-CoV-2 infection, associates with viral miRNA-like small RNA, CoV2-miR-O7a, and may repress mRNAs, such as BATF2, to evade the IFN response. The polypeptide is Protein argonaute-2 (Homo sapiens (Human)).